The primary structure comprises 215 residues: Probable maleylacetoacetate isomerase (215 aa).

In terms of domain architecture, GST N-terminal spans 2–85 (MSLILYGYWR…YLDETYPAPR (84 aa)). The GST C-terminal domain occupies 90 to 215 (RGAERYQVKA…AAPENQPDAC (126 aa)).

This sequence belongs to the GST superfamily. Zeta family.

It catalyses the reaction 4-maleylacetoacetate = 4-fumarylacetoacetate. Its pathway is amino-acid degradation; L-phenylalanine degradation; acetoacetate and fumarate from L-phenylalanine: step 5/6. This Vibrio cholerae serotype O1 (strain ATCC 39315 / El Tor Inaba N16961) protein is Probable maleylacetoacetate isomerase (maiA).